Consider the following 462-residue polypeptide: Argininosuccinate lyase (462 aa).

The protein belongs to the lyase 1 family. Argininosuccinate lyase subfamily.

The protein localises to the cytoplasm. The enzyme catalyses 2-(N(omega)-L-arginino)succinate = fumarate + L-arginine. It participates in amino-acid biosynthesis; L-arginine biosynthesis; L-arginine from L-ornithine and carbamoyl phosphate: step 3/3. This chain is Argininosuccinate lyase, found in Bacillus cereus (strain ATCC 10987 / NRS 248).